Here is a 207-residue protein sequence, read N- to C-terminus: Putative 3-methyladenine DNA glycosylase (207 aa).

Belongs to the DNA glycosylase MPG family.

The sequence is that of Putative 3-methyladenine DNA glycosylase from Listeria welshimeri serovar 6b (strain ATCC 35897 / DSM 20650 / CCUG 15529 / CIP 8149 / NCTC 11857 / SLCC 5334 / V8).